Here is a 229-residue protein sequence, read N- to C-terminus: MDTITLTDHHFLHILQLASSALPVGAYSYSEGLETLVESGTITSQSTLQQWLEAELSYGAIRLEAAVMVRSYQATIMGEMETLRYWNLWLSAARETQELRNSSWQMGRSLMQLLGKIQPEILSLANSVGNPCNYAIAFAIASAHWQVNIQAALLAYLHSWATNLITAGVKLIPLGQTAGQELLLQLQPLISHATVEIMSLKDDELSCCSWGLSLASMQHETQYTRLFRS.

The protein belongs to the UreF family. In terms of assembly, ureD, UreF and UreG form a complex that acts as a GTP-hydrolysis-dependent molecular chaperone, activating the urease apoprotein by helping to assemble the nickel containing metallocenter of UreC. The UreE protein probably delivers the nickel.

Its subcellular location is the cytoplasm. Functionally, required for maturation of urease via the functional incorporation of the urease nickel metallocenter. The sequence is that of Urease accessory protein UreF from Trichormus variabilis (strain ATCC 29413 / PCC 7937) (Anabaena variabilis).